We begin with the raw amino-acid sequence, 359 residues long: Molybdenum import ATP-binding protein ModC (359 aa).

Positions 1–233 (MSGLTVSIRG…IDAESEGGGV (233 aa)) constitute an ABC transporter domain. Position 32 to 39 (32 to 39 (GHSGAGKT)) interacts with ATP. The region spanning 289 to 355 (AISIRNLLPV…VKAVSVDRAA (67 aa)) is the Mop domain.

The protein belongs to the ABC transporter superfamily. Molybdate importer (TC 3.A.1.8) family. As to quaternary structure, the complex is composed of two ATP-binding proteins (ModC), two transmembrane proteins (ModB) and a solute-binding protein (ModA).

It localises to the cell inner membrane. The enzyme catalyses molybdate(out) + ATP + H2O = molybdate(in) + ADP + phosphate + H(+). Part of the ABC transporter complex ModABC involved in molybdenum import. Responsible for energy coupling to the transport system. This chain is Molybdenum import ATP-binding protein ModC, found in Brucella suis biovar 1 (strain 1330).